Consider the following 318-residue polypeptide: 4-diphosphocytidyl-2-C-methyl-D-erythritol kinase (318 aa).

Lys25 is a catalytic residue. Residue 110–120 coordinates ATP; it reads PVAGGMAGGSA. Asp152 is an active-site residue.

Belongs to the GHMP kinase family. IspE subfamily.

The catalysed reaction is 4-CDP-2-C-methyl-D-erythritol + ATP = 4-CDP-2-C-methyl-D-erythritol 2-phosphate + ADP + H(+). Its pathway is isoprenoid biosynthesis; isopentenyl diphosphate biosynthesis via DXP pathway; isopentenyl diphosphate from 1-deoxy-D-xylulose 5-phosphate: step 3/6. Functionally, catalyzes the phosphorylation of the position 2 hydroxy group of 4-diphosphocytidyl-2C-methyl-D-erythritol. This is 4-diphosphocytidyl-2-C-methyl-D-erythritol kinase from Mycobacterium tuberculosis (strain ATCC 25177 / H37Ra).